The chain runs to 31 residues: Photosystem II reaction center protein M (31 aa).

Residues I5–I25 traverse the membrane as a helical segment.

This sequence belongs to the PsbM family. As to quaternary structure, PSII is composed of 1 copy each of membrane proteins PsbA, PsbB, PsbC, PsbD, PsbE, PsbF, PsbH, PsbI, PsbJ, PsbK, PsbL, PsbM, PsbT, PsbX, PsbY, PsbZ, Psb30/Ycf12, at least 3 peripheral proteins of the oxygen-evolving complex and a large number of cofactors. It forms dimeric complexes.

It is found in the plastid membrane. In terms of biological role, one of the components of the core complex of photosystem II (PSII). PSII is a light-driven water:plastoquinone oxidoreductase that uses light energy to abstract electrons from H(2)O, generating O(2) and a proton gradient subsequently used for ATP formation. It consists of a core antenna complex that captures photons, and an electron transfer chain that converts photonic excitation into a charge separation. This subunit is found at the monomer-monomer interface. The chain is Photosystem II reaction center protein M from Cuscuta reflexa (Southern Asian dodder).